The following is a 661-amino-acid chain: Fusaric acid cluster transcription factor FUB12 (661 aa).

The zn(2)-C6 fungal-type DNA-binding region spans 17-48 (CVPCRTRKIKCNAAVVGLPCGSCVSRECPDEC). Disordered regions lie at residues 56–132 (RTVK…PPGQ) and 151–184 (SAAQ…PQLD). Polar residues predominate over residues 73–98 (PDTNGSVLSPRQQQLPTNVSRQATDS). Residues 99-109 (SHSDPVEESIH) are compositionally biased toward basic and acidic residues. Polar residues predominate over residues 110–119 (ASHTGSSLRN). Basic and acidic residues predominate over residues 120 to 129 (DTPHSRDRRP).

Its subcellular location is the nucleus. In terms of biological role, transcription factor that is involved in the formation of the two Fusaric acid derivatives, dehydrofusaric acid and fusarinolic acid, serving as a detoxification mechanism. This Gibberella moniliformis (strain M3125 / FGSC 7600) (Maize ear and stalk rot fungus) protein is Fusaric acid cluster transcription factor FUB12.